We begin with the raw amino-acid sequence, 111 residues long: Nucleoid-associated protein NMA1657 (111 aa).

The protein belongs to the YbaB/EbfC family. In terms of assembly, homodimer.

It is found in the cytoplasm. Its subcellular location is the nucleoid. Its function is as follows. Binds to DNA and alters its conformation. May be involved in regulation of gene expression, nucleoid organization and DNA protection. This chain is Nucleoid-associated protein NMA1657, found in Neisseria meningitidis serogroup A / serotype 4A (strain DSM 15465 / Z2491).